The chain runs to 1798 residues: Non-reducing polyketide synthase nscA (1798 aa).

The interval 25-256 (RRLDQHSKDR…PLPVYDGLCH (232 aa)) is N-terminal acylcarrier protein transacylase domain (SAT). One can recognise a Ketosynthase family 3 (KS3) domain in the interval 392-825 (SSKLAIVGMA…GGNTTLLLED (434 aa)). The disordered stretch occupies residues 436-455 (NTHYDPTGKTENTTQTPYGN). Positions 444–453 (KTENTTQTPY) are enriched in polar residues. Residues Cys-565, His-700, and His-743 each act as for beta-ketoacyl synthase activity in the active site. The malonyl-CoA:ACP transacylase (MAT) domain stretch occupies residues 931–1230 (FTGQGAYYHG…PSASAMSSCR (300 aa)). Positions 1322–1458 (HQITAETVEA…AMIRFEDPVA (137 aa)) are N-terminal hotdog fold. One can recognise a PKS/mFAS DH domain in the interval 1322–1632 (HQITAETVEA…FRRVPRLLMD (311 aa)). Residue His-1354 is the Proton acceptor; for dehydratase activity of the active site. A product template (PT) domain region spans residues 1390–1628 (HMNLTDVEVL…GMIRFRRVPR (239 aa)). The interval 1486 to 1632 (ASRLSKPLAY…FRRVPRLLMD (147 aa)) is C-terminal hotdog fold. Asp-1543 functions as the Proton donor; for dehydratase activity in the catalytic mechanism. The disordered stretch occupies residues 1685–1719 (MASKAPEPAPLLATSSESSTPKESPIVTPAESERA). A compositionally biased stretch (low complexity) spans 1698 to 1709 (TSSESSTPKESP). The Carrier domain occupies 1721 to 1798 (PVDNNMISQC…EMTAWIEEYC (78 aa)). Residue Ser-1758 is modified to O-(pantetheine 4'-phosphoryl)serine.

It depends on pantetheine 4'-phosphate as a cofactor.

It functions in the pathway secondary metabolite biosynthesis. Its function is as follows. Non-reducing polyketide synthase; part of the gene cluster that mediates the biosynthesis of neosartoricin B, a prenylated anthracenone that probably exhibits T-cell antiproliferative activity, suggestive of a physiological role as an immunosuppressive agent. The non-reducing polyketide synthase nscA probably synthesizes and cyclizes the decaketide backbone. The hydrolase nscB then mediates the product release through hydrolysis followed by spontaneous decarboxylation. The prenyltransferase nscD catalyzes the addition of the dimethylallyl group to the aromatic C5. The FAD-dependent monooxygenase nscC is then responsible for the stereospecific hydroxylation at C2. Neosartoricin B can be converted into two additional compounds neosartoricins C and D. Neosartoricin C is a spirocyclic compound that is cyclized through the attack of C3 hydroxyl on C14, followed by dehydration. On the other hand, neosartoricin D is a further cyclized compound in which attack of C2 on C14 in neosartoricin C results in the formation of the acetal-containing dioxabicyclo-octanone ring. Both of these compounds are novel and possibly represent related metabolites of the gene cluster. This is Non-reducing polyketide synthase nscA from Arthroderma benhamiae (strain ATCC MYA-4681 / CBS 112371) (Trichophyton mentagrophytes).